A 412-amino-acid polypeptide reads, in one-letter code: uncharacterized protein (412 aa).

His49 contributes to the Zn(2+) binding site. The active-site Proton acceptor is the Glu52. Zn(2+) contacts are provided by His53 and Glu129.

The protein belongs to the peptidase M16 family. It depends on Zn(2+) as a cofactor.

This is an uncharacterized protein from Rickettsia typhi (strain ATCC VR-144 / Wilmington).